The chain runs to 216 residues: Pyridoxine/pyridoxamine 5'-phosphate oxidase (216 aa).

Substrate-binding positions include 12-15 (RREY) and Lys70. FMN-binding positions include 65–70 (RLVLLK), 80–81 (YT), Arg86, Lys87, and Gln109. Residues Tyr127, Arg131, and Ser135 each contribute to the substrate site. FMN contacts are provided by residues 144–145 (QS) and Trp189. 195-197 (RLH) is a substrate binding site. Arg199 provides a ligand contact to FMN.

It belongs to the pyridoxamine 5'-phosphate oxidase family. As to quaternary structure, homodimer. FMN serves as cofactor.

The enzyme catalyses pyridoxamine 5'-phosphate + O2 + H2O = pyridoxal 5'-phosphate + H2O2 + NH4(+). The catalysed reaction is pyridoxine 5'-phosphate + O2 = pyridoxal 5'-phosphate + H2O2. Its pathway is cofactor metabolism; pyridoxal 5'-phosphate salvage; pyridoxal 5'-phosphate from pyridoxamine 5'-phosphate: step 1/1. The protein operates within cofactor metabolism; pyridoxal 5'-phosphate salvage; pyridoxal 5'-phosphate from pyridoxine 5'-phosphate: step 1/1. In terms of biological role, catalyzes the oxidation of either pyridoxine 5'-phosphate (PNP) or pyridoxamine 5'-phosphate (PMP) into pyridoxal 5'-phosphate (PLP). This is Pyridoxine/pyridoxamine 5'-phosphate oxidase from Baumannia cicadellinicola subsp. Homalodisca coagulata.